A 1204-amino-acid chain; its full sequence is Cingulin (1204 aa).

A head region spans residues 7–357; that stretch reads MAEPRGPVDH…GVISSGSSKA (351 aa). The interval 25-48 is disordered; it reads EPVSGAEMGTLRRGGRRPAKDARA. A ZIM motif is present at residues 48-62; sequence ASTYGVAVRVQGIAG. Positions 54–67 are interaction with TJP1/ZO1; the sequence is AVRVQGIAGQPFVV. Disordered stretches follow at residues 68-174 and 186-266; these read LNSG…DTAP and DGQL…FSRA. Positions 93-119 are enriched in polar residues; that stretch reads ALSSDSELPENPYSQVQGFPAPSQSST. S95, S96, S98, S135, S137, S140, S155, S165, S214, and S217 each carry phosphoserine. Basic and acidic residues predominate over residues 207 to 231; it reads EQRKRSKSLDSRLPRDTLEERERQS. Residues 232 to 245 are compositionally biased toward polar residues; sequence TNHWNPSTKYNNHV. The segment covering 247-261 has biased composition (low complexity); that stretch reads SLKQPAQSPSPSPLS. Phosphoserine is present on residues S258, S276, S338, and S351. A coiled-coil region spans residues 358-1161; it reads MAGQGELARK…SLEKDSWRKA (804 aa). The disordered stretch occupies residues 379–398; it reads VKKRQKLEPSRAGLERQLEE. The residue at position 579 (K579) is an N6-acetyllysine. A disordered region spans residues 1161-1182; the sequence is ASRSAAESALKHEGLSSDEEFD. Positions 1162–1204 are tail; it reads SRSAAESALKHEGLSSDEEFDSVYDPSSIASLLTESNLQTSSC. Phosphoserine occurs at positions 1176, 1177, and 1183.

The protein belongs to the cingulin family. Homodimer. Interacts with TJP1/ZO1 and SPEF1.

The protein localises to the cell junction. The protein resides in the tight junction. Functionally, probably plays a role in the formation and regulation of the tight junction (TJ) paracellular permeability barrier. The chain is Cingulin from Plecturocebus moloch (Dusky titi monkey).